Consider the following 144-residue polypeptide: MRLLGLDVGSKTVGVAQSDPLGWTASSIEIIRINEAQGEFGLDRLGQIISEKKVSGIVIGLPKNMNNTEGPRVEASRNYGKMVSERFGLPIDYQDERLTSVEANRMLIEEADLSRAKRKKVIDSLAAQLILQNYLDKKGRLTNG.

Belongs to the YqgF nuclease family.

The protein localises to the cytoplasm. Its function is as follows. Could be a nuclease involved in processing of the 5'-end of pre-16S rRNA. This Oenococcus oeni (strain ATCC BAA-331 / PSU-1) protein is Putative pre-16S rRNA nuclease.